Consider the following 536-residue polypeptide: UDP-N-acetylmuramate--L-alanine ligase (536 aa).

Position 133-139 (133-139 (GSSGKTT)) interacts with ATP.

This sequence belongs to the MurCDEF family.

The protein resides in the cytoplasm. The enzyme catalyses UDP-N-acetyl-alpha-D-muramate + L-alanine + ATP = UDP-N-acetyl-alpha-D-muramoyl-L-alanine + ADP + phosphate + H(+). The protein operates within cell wall biogenesis; peptidoglycan biosynthesis. Its function is as follows. Cell wall formation. This is UDP-N-acetylmuramate--L-alanine ligase from Wolbachia sp. subsp. Brugia malayi (strain TRS).